The sequence spans 101 residues: Large ribosomal subunit protein uL23 (101 aa).

This sequence belongs to the universal ribosomal protein uL23 family. In terms of assembly, part of the 50S ribosomal subunit. Contacts protein L29, and trigger factor when it is bound to the ribosome.

Its function is as follows. One of the early assembly proteins it binds 23S rRNA. One of the proteins that surrounds the polypeptide exit tunnel on the outside of the ribosome. Forms the main docking site for trigger factor binding to the ribosome. This Nocardia farcinica (strain IFM 10152) protein is Large ribosomal subunit protein uL23.